The primary structure comprises 65 residues: Large ribosomal subunit protein bL35 (65 aa).

Over residues Met-1 to Ser-15 the composition is skewed to basic residues. Positions Met-1–Ser-21 are disordered.

This sequence belongs to the bacterial ribosomal protein bL35 family.

The chain is Large ribosomal subunit protein bL35 from Dechloromonas aromatica (strain RCB).